The sequence spans 273 residues: Cyclic di-AMP synthase CdaA (273 aa).

3 helical membrane passes run 12–32 (LGNA…IMVI), 40–60 (LLKG…LGLS), and 61–81 (TLQW…IIIF). The DAC domain maps to 82–242 (QPELRRALEQ…NGDLHRELTE (161 aa)).

This sequence belongs to the adenylate cyclase family. DacA/CdaA subfamily. As to quaternary structure, probably a homodimer. Interacts with CdaR. May interact with GlmM.

Its subcellular location is the cell membrane. The catalysed reaction is 2 ATP = 3',3'-c-di-AMP + 2 diphosphate. With respect to regulation, DAC activity is stimulated about 20-fold in E.coli by coexpression with CdaR. In terms of biological role, one of 3 paralogous diadenylate cyclases (DAC) in this bacteria, catalyzing the condensation of 2 ATP molecules into cyclic di-AMP (c-di-AMP). Upon expression in E.coli leads to c-di-AMP synthesis. Probably the main producer of c-di-AMP for the cell; is probably implicated in control of peptidoglycan synthesis. In B.subtilis c-di-AMP is a second messenger that mediates growth, DNA repair and cell wall homeostasis; it is toxic when present in excess. The polypeptide is Cyclic di-AMP synthase CdaA (Bacillus subtilis (strain 168)).